Here is a 96-residue protein sequence, read N- to C-terminus: uncharacterized protein (96 aa).

Residues 13-35 (PVVRYVVALLHWLLWRVVVIIAI) traverse the membrane as a helical segment.

It localises to the membrane. This is an uncharacterized protein from Archaeoglobus fulgidus (strain ATCC 49558 / DSM 4304 / JCM 9628 / NBRC 100126 / VC-16).